A 501-amino-acid polypeptide reads, in one-letter code: Cystine/glutamate transporter (501 aa).

The Cytoplasmic segment spans residues 1–43; that stretch reads MVRKPVVSTISKGGYLQGNVNGRLPSLGNKEPPGQEKVQLKRK. The residue at position 26 (Ser26) is a Phosphoserine. Residues 44–64 form a helical membrane-spanning segment; sequence VTLLRGVSIIIGTIIGAGIFI. Over 65–74 the chain is Extracellular; that stretch reads SPKGVLQNTG. Residues 75–95 form a helical membrane-spanning segment; sequence SVGMSLTIWTVCGVLSLFGAL. Topologically, residues 96–101 are cytoplasmic; the sequence is SYAELG. Residues 102–116 lie within the membrane without spanning it; it reads TTIKKSGGHYTYILE. Residues 117-130 lie on the Cytoplasmic side of the membrane; the sequence is VFGPLPAFVRVWVE. Residues 131–150 form a helical membrane-spanning segment; sequence LLIIRPAATAVISLAFGRYI. An L-glutamate-binding site is contributed by Arg135. Topologically, residues 151 to 163 are extracellular; it reads LEPFFIQCEIPEL. A helical membrane pass occupies residues 164–179; the sequence is AIKLITAVGITVVMVL. The Cytoplasmic portion of the chain corresponds to 180-193; sequence NSMSVSWSARIQIF. A helical transmembrane segment spans residues 194–210; the sequence is LTFCKLTAILIIIVPGV. The Extracellular portion of the chain corresponds to 211-234; it reads MQLIKGQTQNFKDAFSGRDSSITR. Residues 235 to 255 traverse the membrane as a helical segment; it reads LPLAFYYGMYAYAGWFYLNFV. Tyr244 provides a ligand contact to L-glutamate. Over 256-265 the chain is Cytoplasmic; that stretch reads TEEVENPEKT. Residues 266–286 traverse the membrane as a helical segment; the sequence is IPLAICISMAIVTIGYVLTNV. Topologically, residues 287-317 are extracellular; it reads AYFTTINAEELLLSNAVAVTFSERLLGNFSL. The N-linked (GlcNAc...) asparagine glycan is linked to Asn314. Residues 318 to 338 form a helical membrane-spanning segment; it reads AVPIFVALSCFGSMNGGVFAV. Over 339–364 the chain is Cytoplasmic; that stretch reads SRLFYVASREGHLPEILSMIHVRKHT. Residues 365-385 form a helical membrane-spanning segment; sequence PLPAVIVLHPLTMIMLFSGDL. The Extracellular segment spans residues 386–387; it reads DS. A helical membrane pass occupies residues 388–408; it reads LLNFLSFARWLFIGLAVAGLI. Residues 409-422 lie on the Cytoplasmic side of the membrane; sequence YLRYKCPDMHRPFK. The helical transmembrane segment at 423-443 threads the bilayer; sequence VPLFIPALFSFTCLFMVALSL. Residues 444-449 are Extracellular-facing; that stretch reads YSDPFS. A helical transmembrane segment spans residues 450 to 470; sequence TGIGSVITLTGVPAYYLFIIW. The Cytoplasmic portion of the chain corresponds to 471-501; sequence DKKPRWFRIMSEKITRTLQIILEVVPEEDKL.

Belongs to the amino acid-polyamine-organocation (APC) superfamily. L-type amino acid transporter (LAT) (TC 2.A.3.8) family. Disulfide-linked heterodimer with the amino acid transport protein SLC3A2/4F2hc; this interaction mediates cell membrane localization.

It is found in the cell membrane. The protein resides in the cell projection. It localises to the microvillus membrane. It catalyses the reaction L-cystine(out) + L-glutamate(in) = L-cystine(in) + L-glutamate(out). It carries out the reaction an L-alpha-amino acid(in) + L-kynurenine(out) = an L-alpha-amino acid(out) + L-kynurenine(in). The enzyme catalyses N-acetyl-L-cysteine(out) + L-glutamate(in) = N-acetyl-L-cysteine(in) + L-glutamate(out). In terms of biological role, heterodimer with SLC3A2, that functions as an antiporter by mediating the exchange of extracellular anionic L-cystine and intracellular L-glutamate across the cellular plasma membrane. Provides L-cystine for the maintenance of the redox balance between extracellular L-cystine and L-cysteine and for the maintenance of the intracellular levels of glutathione that is essential for cells protection from oxidative stress. The transport is sodium-independent, electroneutral with a stoichiometry of 1:1, and is drove by the high intracellular concentration of L-glutamate and the intracellular reduction of L-cystine. In addition, mediates the import of L-kynurenine leading to anti-ferroptotic signaling propagation required to maintain L-cystine and glutathione homeostasis. Moreover, mediates N-acetyl-L-cysteine uptake into the placenta leading to subsequently down-regulation of pathways associated with oxidative stress, inflammation and apoptosis. In vitro can also transport L-aspartate. May participate in astrocyte and meningeal cell proliferation during development and can provide neuroprotection by promoting glutathione synthesis and delivery from non-neuronal cells such as astrocytes and meningeal cells to immature neurons. Controls the production of pheomelanin pigment directly. This chain is Cystine/glutamate transporter, found in Pongo abelii (Sumatran orangutan).